The primary structure comprises 326 residues: tRNA(Ile)-lysidine synthase (326 aa).

An ATP-binding site is contributed by 33–38 (SGGPDS).

This sequence belongs to the tRNA(Ile)-lysidine synthase family.

It localises to the cytoplasm. It carries out the reaction cytidine(34) in tRNA(Ile2) + L-lysine + ATP = lysidine(34) in tRNA(Ile2) + AMP + diphosphate + H(+). Ligates lysine onto the cytidine present at position 34 of the AUA codon-specific tRNA(Ile) that contains the anticodon CAU, in an ATP-dependent manner. Cytidine is converted to lysidine, thus changing the amino acid specificity of the tRNA from methionine to isoleucine. This is tRNA(Ile)-lysidine synthase from Novosphingobium aromaticivorans (strain ATCC 700278 / DSM 12444 / CCUG 56034 / CIP 105152 / NBRC 16084 / F199).